Consider the following 421-residue polypeptide: MDLEAKVKKMGLGHEQGFGAPCLKCKEKCEGFELHFWRKICRNCKCGQEEHDVLLSNEEDRKVGKLFEDTKYTTLIAKLKSDGIPMYKRNVMILTNPVAAKKNVSINTVTYEWAPPVQNQALARQYMQMLPKEKQPVAGSEGAQYRKKQLAKQLPAHDQDPSKCHELSPKEVKEMEQFVKKYKSEALGVGDVKLPREMDAQGPNRMYIPSGDRSTPAAVGAMEDKSAEHKKTQYSCYCCKQSMKEGDPAIYAERAGYDKLWHPACFVCSTCHELLVDMIYFWKKGKLYCGRHYCDSEKPRCAGCDELIFSNEYTQAENQNWHLKHFCCFDCDNILAGEIYVMVNDKPVCKPCYVKNHAVVCQGCHNAIDPEVQRVTYNNFSWHASTECFLCSCCSKCLIGQKFMPVEGMVFCSVECKKMMS.

Residues 92-199 (MILTNPVAAK…GDVKLPREMD (108 aa)) form the PET domain. The tract at residues 133 to 164 (EKQPVAGSEGAQYRKKQLAKQLPAHDQDPSKC) is disordered. The segment covering 155–164 (PAHDQDPSKC) has biased composition (basic and acidic residues). 3 LIM zinc-binding domains span residues 234-297 (YSCY…CDSE), 299-359 (PRCA…NHAV), and 362-421 (QGCH…KMMS).

Belongs to the prickle / espinas / testin family. As to quaternary structure, interacts via LIM domain 1 with ZYX. Interacts (via LIM domain 3) with ENAH and VASP. Interacts with ALKBH4, talin, actin, alpha-actinin, GRIP1 and PXN. Interacts (via LIM domain 2) with ACTL7A (via N-terminus). Heterodimer with ACTL7A; the heterodimer interacts with ENAH to form a heterotrimer.

It localises to the cytoplasm. Its subcellular location is the cell junction. The protein resides in the focal adhesion. Its function is as follows. Scaffold protein that may play a role in cell adhesion, cell spreading and in the reorganization of the actin cytoskeleton. Plays a role in the regulation of cell proliferation. May act as a tumor suppressor. The chain is Testin (TES) from Mustela putorius furo (European domestic ferret).